The sequence spans 502 residues: Na(+)/H(+) antiporter NhaB (502 aa).

The next 11 helical transmembrane spans lie at 27–49, 66–86, 95–115, 128–148, 149–169, 241–261, 299–318, 350–370, 394–414, 450–470, and 477–497; these read AFLV…VLIL, PGGL…ESVF, VILL…LLLY, IVLS…LDAL, TVTA…HQFA, FFLQ…VTCI, IAAL…SLAL, FEEA…VAVI, MFFI…VATV, ATPN…APLI, and MVLM…IAVY.

It belongs to the NhaB Na(+)/H(+) (TC 2.A.34) antiporter family.

The protein resides in the cell inner membrane. The catalysed reaction is 2 Na(+)(in) + 3 H(+)(out) = 2 Na(+)(out) + 3 H(+)(in). Its function is as follows. Na(+)/H(+) antiporter that extrudes sodium in exchange for external protons. The sequence is that of Na(+)/H(+) antiporter NhaB from Teredinibacter turnerae (strain ATCC 39867 / T7901).